Here is a 181-residue protein sequence, read N- to C-terminus: SecB-like chaperone MT2006 (181 aa).

It belongs to the SecB-like family. In terms of assembly, homotetramer, interacts with antitoxin HigA1.

Functionally, chaperone component of an atypical, type II toxin-antitoxin chaperone (TAC) module, probably required for antitoxin HigA1 to neutralize its cognate toxin HigB1. In Mycobacterium tuberculosis (strain CDC 1551 / Oshkosh), this protein is SecB-like chaperone MT2006 (secBL).